The primary structure comprises 567 residues: Inactive protein kinase SELMODRAFT_444075 (567 aa).

The interval 148 to 206 is disordered; the sequence is NETRRKGPSPSEVLNSTTSSPASHKPQVLNDFLRMKESREYTEETDTQRNVSRPVDRVS. A compositionally biased stretch (polar residues) spans 159 to 169; the sequence is EVLNSTTSSPA. A compositionally biased stretch (basic and acidic residues) spans 180–189; it reads LRMKESREYT. Residues 196-206 are compositionally biased toward low complexity; it reads RNVSRPVDRVS. Residues 255–487 enclose the Protein kinase domain; it reads FSDVNFLAEG…EGDSLSDTSL (233 aa). ATP contacts are provided by residues 261–269 and Lys-283; that span reads LAEGGYGSV. The segment covering 511 to 538 has biased composition (low complexity); sequence DSSSSRSSSASSVLKSFSRTQHSSRSSS. The segment at 511–567 is disordered; sequence DSSSSRSSSASSVLKSFSRTQHSSRSSSNAGSPLNPAATQALAFKKYNKNTTRHTQD. Residues 556–567 are compositionally biased toward basic residues; the sequence is KYNKNTTRHTQD.

This is Inactive protein kinase SELMODRAFT_444075 from Selaginella moellendorffii (Spikemoss).